Here is a 254-residue protein sequence, read N- to C-terminus: Phosphoribosylaminoimidazole-succinocarboxamide synthase (254 aa).

Belongs to the SAICAR synthetase family.

It catalyses the reaction 5-amino-1-(5-phospho-D-ribosyl)imidazole-4-carboxylate + L-aspartate + ATP = (2S)-2-[5-amino-1-(5-phospho-beta-D-ribosyl)imidazole-4-carboxamido]succinate + ADP + phosphate + 2 H(+). It functions in the pathway purine metabolism; IMP biosynthesis via de novo pathway; 5-amino-1-(5-phospho-D-ribosyl)imidazole-4-carboxamide from 5-amino-1-(5-phospho-D-ribosyl)imidazole-4-carboxylate: step 1/2. The protein is Phosphoribosylaminoimidazole-succinocarboxamide synthase of Brucella anthropi (strain ATCC 49188 / DSM 6882 / CCUG 24695 / JCM 21032 / LMG 3331 / NBRC 15819 / NCTC 12168 / Alc 37) (Ochrobactrum anthropi).